A 99-amino-acid polypeptide reads, in one-letter code: SAGA-associated factor 11 (99 aa).

An SGF11-type zinc finger spans residues 71 to 92 (FYCENCGREVSGNRFAAHLQRC).

It belongs to the SGF11 family. As to quaternary structure, component of the 1.8 MDa SAGA transcription coactivator-HAT complex. SAGA is built of 5 distinct domains with specialized functions. Within the SAGA complex, SUS1, SGF11, SGF73 and UBP8 form an additional subcomplex of SAGA called the DUB module (deubiquitination module). Interacts directly with SGF73, SUS1 and UBP8.

The protein localises to the nucleus. Functionally, functions as a component of the transcription regulatory histone acetylation (HAT) complex SAGA. At the promoters, SAGA is required for recruitment of the basal transcription machinery. It influences RNA polymerase II transcriptional activity through different activities such as TBP interaction and promoter selectivity, interaction with transcription activators, and chromatin modification through histone acetylation and deubiquitination. SAGA acetylates nucleosomal histone H3 to some extent (to form H3K9ac, H3K14ac, H3K18ac and H3K23ac). SAGA interacts with DNA via upstream activating sequences (UASs). Involved in transcriptional regulation of a subset of SAGA-regulated genes. Within the SAGA complex, participates in a subcomplex, that specifically deubiquitinates histones H2B. The polypeptide is SAGA-associated factor 11 (Candida glabrata (strain ATCC 2001 / BCRC 20586 / JCM 3761 / NBRC 0622 / NRRL Y-65 / CBS 138) (Yeast)).